The chain runs to 20 residues: IVGGTEVTPGEIPYQLSFQD.

The region spanning 1–20 (IVGGTEVTPGEIPYQLSFQD) is the Peptidase S1 domain. The tract at residues 1–20 (IVGGTEVTPGEIPYQLSFQD) is disordered.

It belongs to the peptidase S1 family.

The catalysed reaction is Hydrolysis of proteins, with broad specificity for peptide bonds. Native collagen is cleaved about 75% of the length of the molecule from the N-terminus. Low activity on small molecule substrates of both trypsin and chymotrypsin.. Functionally, this enzyme is a serine protease capable of degrading the native triple helix of collagen. This is Collagenolytic protease 35 kDa 2 from Chionoecetes opilio (Atlantic snow crab).